Consider the following 180-residue polypeptide: Large ribosomal subunit protein uL5c (180 aa).

This sequence belongs to the universal ribosomal protein uL5 family. In terms of assembly, part of the 50S ribosomal subunit; contacts the 5S rRNA.

Its subcellular location is the plastid. The protein localises to the chloroplast. Its function is as follows. Binds 5S rRNA, forms part of the central protuberance of the 50S subunit. In Chlorella vulgaris (Green alga), this protein is Large ribosomal subunit protein uL5c (rpl5).